Reading from the N-terminus, the 1248-residue chain is MYNPYQQSGGPAYGADGYGQQGYGQAYGQQGFGQAYGQQGGGYEAGPAATYTAGAAQPLRPTATGFVNAAASRGLNTELKIPLFRLSFLTAADQAKFETLFRSAVRPGATTITGEDCKHILLRSGLSPFQLGLIWTLCDTNNAGELLFPEFALAMHLVNGVLQGERIPRALDSKVKNEVSSFVDLINFSVGSNSPPPEGQKARTPFDALTQGAGTLQPQATGFMPPTSFGVPQATGLGFGQAPMQPQATGYMPPTSFGAGLGAHTTGGNALASQMTGGLQQYAGGAFQNYQATGGKGLGAQVTGGFAQQPAGANPLLSQLTGGQGFQQQRQPTGANSLMPQVTGGFQQPSNAIGSQPPAMGMPQGLSQGQSVGLQAQATGFLPPSQFAPTAPLAAQKTGFGNNEIYSHAAFASGFPAGEDDKLTPEEKSLFYNIFDTYDTDKTGQLHFKVAAEIFRKSGLNRSELERIWNLCDTNNSGQLNRQEFAVGMHLIYRRINGHNLPHTLPPSLVPSSTRILNNVKNQLKVSSSSKKEPTRIDGLAYKNNDDDILPSFKNRRKTFTEPRQSKDNKTVDDLKKLVEEKRRKLESERSQLSLRQKDQQIKDEETMRHVDSLMHQIRSLPMKKHAAVPSDMKARFDSLTSSISTLFNNIAEIDDEITNAKVHLYRLKNPSSIVGSGPNGEVTEYDQKKARQKAVLAARMAALTGTPIETPSEADLRREEQGLNEEVAKIKEESRKNQEILNDIKSSITEISAPISTFIYGSGNADKDPAYERWELGIGLEPEVCDFIRKLKETQTQAQAQEQARAQEQARAQEQARAQEKARAQEKARAQEQARVQEQARAQEQARAQEQARAQEQARAQEQARAQEQAKADAASRESTRSPEEFARWPQDQSPSHPGLTASVSPQSQSVSVSNRGTPQLGQQQMGSGFYSDYQSADARAAYVRQQSQLKQPAPAPTSTTDFNSEDEEDEEERSLREQLAALKLKRKAEKEAKLAVGRNQTGASQDPAVRASPDEWDEQPSRPSHTPVYSTSPAMASQGELPKQGSSAPHLHPTTTGDRSPFFKQKQGSTSTFDLKAAEQQRRLQRGLDDGDGWSDDEDSSSKPTQPTATTSATDIPSSGADSGARAPVSAAPASIVRPDGSTATQPPVVPSPPVPQPGPSSGAPIPIAPPLPTLNGQQAGPAPSVAPTGHVERAASQPQINDGNEDDEDSDVLSIPESVESEDGKDQYTTAIPEIPYIPPPPPLP.

In terms of domain architecture, EH 1 spans 93-182; sequence DQAKFETLFR…SKVKNEVSSF (90 aa). Positions 126-161 constitute an EF-hand 1 domain; it reads LSPFQLGLIWTLCDTNNAGELLFPEFALAMHLVNGV. The disordered stretch occupies residues 313–337; that stretch reads ANPLLSQLTGGQGFQQQRQPTGANS. The segment covering 316–337 has biased composition (polar residues); that stretch reads LLSQLTGGQGFQQQRQPTGANS. EF-hand domains are found at residues 426–449 and 460–495; these read EEKS…LHFK and LNRS…IYRR. In terms of domain architecture, EH 2 spans 427–516; it reads EKSLFYNIFD…PSLVPSSTRI (90 aa). Residues aspartate 473, asparagine 475, serine 477, glutamine 479, and glutamate 484 each contribute to the Ca(2+) site. The segment at 548–575 is disordered; the sequence is DILPSFKNRRKTFTEPRQSKDNKTVDDL. The span at 559-575 shows a compositional bias: basic and acidic residues; that stretch reads TFTEPRQSKDNKTVDDL. Coiled-coil stretches lie at residues 566–601, 713–746, and 787–879; these read SKDN…KDQQ, SEAD…NDIK, and DFIR…ASRE. A compositionally biased stretch (low complexity) spans 800–817; sequence QAQEQARAQEQARAQEQA. A disordered region spans residues 800-1248; that stretch reads QAQEQARAQE…PYIPPPPPLP (449 aa). Positions 818 to 833 are enriched in basic and acidic residues; the sequence is RAQEKARAQEKARAQE. Low complexity predominate over residues 834 to 868; that stretch reads QARVQEQARAQEQARAQEQARAQEQARAQEQARAQ. A compositionally biased stretch (basic and acidic residues) spans 869–888; it reads EQAKADAASRESTRSPEEFA. Residues 904–915 show a composition bias toward low complexity; that stretch reads SVSPQSQSVSVS. 2 stretches are compositionally biased toward polar residues: residues 916-928 and 946-964; these read NRGT…QQMG and RQQS…TTDF. A compositionally biased stretch (acidic residues) spans 965 to 974; it reads NSEDEEDEEE. Residues 965–997 adopt a coiled-coil conformation; it reads NSEDEEDEEERSLREQLAALKLKRKAEKEAKLA. Polar residues predominate over residues 1023 to 1037; that stretch reads SRPSHTPVYSTSPAM. A compositionally biased stretch (basic and acidic residues) spans 1078 to 1091; it reads KAAEQQRRLQRGLD. A compositionally biased stretch (acidic residues) spans 1092-1101; that stretch reads DGDGWSDDED. The span at 1105–1123 shows a compositional bias: polar residues; it reads KPTQPTATTSATDIPSSGA. Composition is skewed to pro residues over residues 1150 to 1161 and 1239 to 1248; these read PVVPSPPVPQPG and PYIPPPPPLP.

Belongs to the PAN1 family. Component of the PAN1 actin cytoskeleton-regulatory complex.

Its subcellular location is the cell membrane. It localises to the endosome membrane. The protein localises to the cytoplasm. It is found in the cytoskeleton. The protein resides in the actin patch. In terms of biological role, component of the PAN1 actin cytoskeleton-regulatory complex required for the internalization of endosomes during actin-coupled endocytosis. The complex links the site of endocytosis to the cell membrane-associated actin cytoskeleton. Mediates uptake of external molecules and vacuolar degradation of plasma membrane proteins. Plays a role in the proper organization of the cell membrane-associated actin cytoskeleton and promotes its destabilization. The protein is Actin cytoskeleton-regulatory complex protein PAN1 (PAN1) of Eremothecium gossypii (strain ATCC 10895 / CBS 109.51 / FGSC 9923 / NRRL Y-1056) (Yeast).